Here is a 428-residue protein sequence, read N- to C-terminus: Elongation factor 1-alpha (428 aa).

Positions 5-225 (KPILNVAFIG…DGFQPPEKPT (221 aa)) constitute a tr-type G domain. Residues 14–21 (GHVDAGKS) are G1. 14-21 (GHVDAGKS) is a GTP binding site. Mg(2+) is bound at residue serine 21. Residues 70 to 74 (GVTID) form a G2 region. The G3 stretch occupies residues 91-94 (DCPG). GTP-binding positions include 91-95 (DCPGH) and 149-152 (NKMD). The G4 stretch occupies residues 149–152 (NKMD). The interval 189 to 191 (ASL) is G5.

This sequence belongs to the TRAFAC class translation factor GTPase superfamily. Classic translation factor GTPase family. EF-Tu/EF-1A subfamily.

It is found in the cytoplasm. It carries out the reaction GTP + H2O = GDP + phosphate + H(+). In terms of biological role, GTP hydrolase that promotes the GTP-dependent binding of aminoacyl-tRNA to the A-site of ribosomes during protein biosynthesis. The sequence is that of Elongation factor 1-alpha from Methanococcus vannielii (strain ATCC 35089 / DSM 1224 / JCM 13029 / OCM 148 / SB).